A 121-amino-acid polypeptide reads, in one-letter code: Putative ankyrin repeat protein L215 (121 aa).

2 ANK repeats span residues 10–40 (QYDSILMYAASNGYDKIVKLILDKVGTSFKE) and 42–71 (IHETILLWAFQNEHYETIQLLIDHGFNKLV).

This Acanthamoeba polyphaga mimivirus (APMV) protein is Putative ankyrin repeat protein L215.